We begin with the raw amino-acid sequence, 119 residues long: Ribonuclease P protein component (119 aa).

This sequence belongs to the RnpA family. As to quaternary structure, consists of a catalytic RNA component (M1 or rnpB) and a protein subunit.

It carries out the reaction Endonucleolytic cleavage of RNA, removing 5'-extranucleotides from tRNA precursor.. Functionally, RNaseP catalyzes the removal of the 5'-leader sequence from pre-tRNA to produce the mature 5'-terminus. It can also cleave other RNA substrates such as 4.5S RNA. The protein component plays an auxiliary but essential role in vivo by binding to the 5'-leader sequence and broadening the substrate specificity of the ribozyme. The chain is Ribonuclease P protein component from Edwardsiella ictaluri (strain 93-146).